Here is a 432-residue protein sequence, read N- to C-terminus: Adenylosuccinate synthetase (432 aa).

GTP contacts are provided by residues 12–18 (GDEGKGK) and 40–42 (GHT). Aspartate 13 functions as the Proton acceptor in the catalytic mechanism. Residues aspartate 13 and glycine 40 each coordinate Mg(2+). Residues 13 to 16 (DEGK), 38 to 41 (NAGH), threonine 129, arginine 143, glutamine 224, threonine 239, and arginine 303 contribute to the IMP site. The active-site Proton donor is histidine 41. 299–305 (VTTGRRR) contributes to the substrate binding site. Residues arginine 305, 331–333 (KLD), and 413–415 (GVG) contribute to the GTP site.

This sequence belongs to the adenylosuccinate synthetase family. Homodimer. Mg(2+) serves as cofactor.

It is found in the cytoplasm. It catalyses the reaction IMP + L-aspartate + GTP = N(6)-(1,2-dicarboxyethyl)-AMP + GDP + phosphate + 2 H(+). Its pathway is purine metabolism; AMP biosynthesis via de novo pathway; AMP from IMP: step 1/2. In terms of biological role, plays an important role in the de novo pathway of purine nucleotide biosynthesis. Catalyzes the first committed step in the biosynthesis of AMP from IMP. The sequence is that of Adenylosuccinate synthetase from Mycobacterium tuberculosis (strain CDC 1551 / Oshkosh).